We begin with the raw amino-acid sequence, 214 residues long: uncharacterized protein (214 aa).

Residues 9-31 (FLYFAISVLVNLLFLKILYIYLF) traverse the membrane as a helical segment. The interval 53-74 (APPKKPGKPQKKVVKKKPEAVS) is disordered. Basic residues predominate over residues 54–67 (PPKKPGKPQKKVVK).

Its subcellular location is the membrane. This is an uncharacterized protein from Aquifex aeolicus (strain VF5).